A 365-amino-acid polypeptide reads, in one-letter code: 3-methyl-L-tyrosine peroxygenase (365 aa).

Residue 313-317 (HIGVC) coordinates heme.

Heme is required as a cofactor.

The catalysed reaction is 3-methyl-L-tyrosine + H2O2 = 5-hydroxy-3-methyl-L-tyrosine + H2O. It participates in antibiotic biosynthesis. Functionally, heme-containing peroxygenase that mediates the hydroxylation of 3-methyl-L-tyrosine (3-Me-Tyr) into 3-hydroxy-5-methyl-L-tyrosine (3-OH-5-Me-Tyr) in biosynthesis of saframycin A, a potent antitumor antibiotic that belongs to the tetrahydroisoquinoline family. Involved in biosynthesis of 3-hydroxy-5-methyl-O-methyltyrosine (3-OH-5-Me-OMe-Tyr), a core structure of saframycin A. The chain is 3-methyl-L-tyrosine peroxygenase from Streptomyces lavendulae.